Here is a 52-residue protein sequence, read N- to C-terminus: Ovomucoid (52 aa).

The region spanning 2–52 is the Kazal-like domain; that stretch reads VDCSDYPKPVCTLEEMPLCGSDNKTYGNKCNFCNAVVDSNGTLTLSHFGKC. 3 cysteine pairs are disulfide-bonded: C4-C34, C12-C31, and C20-C52. N-linked (GlcNAc...) asparagine glycosylation occurs at N41.

It is found in the secreted. This Scythrops novaehollandiae (Channel-billed cuckoo) protein is Ovomucoid.